Consider the following 500-residue polypeptide: Aspartyl/glutamyl-tRNA(Asn/Gln) amidotransferase subunit B (500 aa).

Belongs to the GatB/GatE family. GatB subfamily. As to quaternary structure, heterotrimer of A, B and C subunits.

It carries out the reaction L-glutamyl-tRNA(Gln) + L-glutamine + ATP + H2O = L-glutaminyl-tRNA(Gln) + L-glutamate + ADP + phosphate + H(+). The enzyme catalyses L-aspartyl-tRNA(Asn) + L-glutamine + ATP + H2O = L-asparaginyl-tRNA(Asn) + L-glutamate + ADP + phosphate + 2 H(+). Functionally, allows the formation of correctly charged Asn-tRNA(Asn) or Gln-tRNA(Gln) through the transamidation of misacylated Asp-tRNA(Asn) or Glu-tRNA(Gln) in organisms which lack either or both of asparaginyl-tRNA or glutaminyl-tRNA synthetases. The reaction takes place in the presence of glutamine and ATP through an activated phospho-Asp-tRNA(Asn) or phospho-Glu-tRNA(Gln). This chain is Aspartyl/glutamyl-tRNA(Asn/Gln) amidotransferase subunit B, found in Rhizobium meliloti (strain 1021) (Ensifer meliloti).